Reading from the N-terminus, the 61-residue chain is UPF0391 membrane protein Ajs_0703 (61 aa).

The next 2 helical transmembrane spans lie at A5–A25 and V33–I53.

Belongs to the UPF0391 family.

It localises to the cell membrane. In Acidovorax sp. (strain JS42), this protein is UPF0391 membrane protein Ajs_0703.